A 551-amino-acid polypeptide reads, in one-letter code: Sodium-dependent high-affinity dicarboxylate transporter 2 (551 aa).

10 consecutive transmembrane segments (helical) span residues 9 to 29 (LIKK…LFFG), 34 to 54 (CLFS…PIGV), 82 to 102 (SIVL…TGLH), 119 to 139 (VMLL…SDTA), 194 to 214 (FCKA…TAII), 243 to 263 (WMVF…IILV), 347 to 367 (VSGV…FDPI), 417 to 437 (IFVG…IVIM), 449 to 469 (IFIP…LYLA), and 497 to 517 (VISM…CILI).

Belongs to the SLC13A/DASS transporter (TC 2.A.47) family. NADC subfamily.

The protein localises to the membrane. High-affinity sodium-dicarboxylate cotransporter that accepts a range of tricarboxylic acid-cycle intermediates with 4-5 carbon atoms. There is no interaction with monocarboxylates. In Caenorhabditis elegans, this protein is Sodium-dependent high-affinity dicarboxylate transporter 2 (nac-2).